Here is a 269-residue protein sequence, read N- to C-terminus: Tryptophan synthase alpha chain (269 aa).

Active-site proton acceptor residues include E49 and D60.

Belongs to the TrpA family. Tetramer of two alpha and two beta chains.

The enzyme catalyses (1S,2R)-1-C-(indol-3-yl)glycerol 3-phosphate + L-serine = D-glyceraldehyde 3-phosphate + L-tryptophan + H2O. The protein operates within amino-acid biosynthesis; L-tryptophan biosynthesis; L-tryptophan from chorismate: step 5/5. In terms of biological role, the alpha subunit is responsible for the aldol cleavage of indoleglycerol phosphate to indole and glyceraldehyde 3-phosphate. The chain is Tryptophan synthase alpha chain from Actinobacillus pleuropneumoniae serotype 5b (strain L20).